A 616-amino-acid chain; its full sequence is Dihydroxy-acid dehydratase (616 aa).

Aspartate 81 is a binding site for Mg(2+). Position 122 (cysteine 122) interacts with [2Fe-2S] cluster. Residues aspartate 123 and lysine 124 each contribute to the Mg(2+) site. An N6-carboxylysine modification is found at lysine 124. Residue cysteine 195 participates in [2Fe-2S] cluster binding. Glutamate 491 contacts Mg(2+). Serine 517 acts as the Proton acceptor in catalysis.

Belongs to the IlvD/Edd family. As to quaternary structure, homodimer. [2Fe-2S] cluster serves as cofactor. Requires Mg(2+) as cofactor.

It catalyses the reaction (2R)-2,3-dihydroxy-3-methylbutanoate = 3-methyl-2-oxobutanoate + H2O. It carries out the reaction (2R,3R)-2,3-dihydroxy-3-methylpentanoate = (S)-3-methyl-2-oxopentanoate + H2O. The protein operates within amino-acid biosynthesis; L-isoleucine biosynthesis; L-isoleucine from 2-oxobutanoate: step 3/4. It participates in amino-acid biosynthesis; L-valine biosynthesis; L-valine from pyruvate: step 3/4. Functionally, functions in the biosynthesis of branched-chain amino acids. Catalyzes the dehydration of (2R,3R)-2,3-dihydroxy-3-methylpentanoate (2,3-dihydroxy-3-methylvalerate) into 2-oxo-3-methylpentanoate (2-oxo-3-methylvalerate) and of (2R)-2,3-dihydroxy-3-methylbutanoate (2,3-dihydroxyisovalerate) into 2-oxo-3-methylbutanoate (2-oxoisovalerate), the penultimate precursor to L-isoleucine and L-valine, respectively. This Salmonella schwarzengrund (strain CVM19633) protein is Dihydroxy-acid dehydratase.